The following is a 409-amino-acid chain: LL-diaminopimelate aminotransferase (409 aa).

Substrate-binding residues include Tyr-15 and Gly-42. Pyridoxal 5'-phosphate contacts are provided by residues Tyr-72, 108-109 (AK), Tyr-132, Asn-186, Tyr-217, and 245-247 (SFS). Positions 109, 132, and 186 each coordinate substrate. Residue Lys-248 is modified to N6-(pyridoxal phosphate)lysine. Residues Arg-256 and Asn-291 each coordinate pyridoxal 5'-phosphate. Positions 291 and 385 each coordinate substrate.

It belongs to the class-I pyridoxal-phosphate-dependent aminotransferase family. LL-diaminopimelate aminotransferase subfamily. In terms of assembly, homodimer. Pyridoxal 5'-phosphate is required as a cofactor.

It catalyses the reaction (2S,6S)-2,6-diaminopimelate + 2-oxoglutarate = (S)-2,3,4,5-tetrahydrodipicolinate + L-glutamate + H2O + H(+). It participates in amino-acid biosynthesis; L-lysine biosynthesis via DAP pathway; LL-2,6-diaminopimelate from (S)-tetrahydrodipicolinate (aminotransferase route): step 1/1. Functionally, involved in the synthesis of meso-diaminopimelate (m-DAP or DL-DAP), required for both lysine and peptidoglycan biosynthesis. Catalyzes the direct conversion of tetrahydrodipicolinate to LL-diaminopimelate. The protein is LL-diaminopimelate aminotransferase of Desulfosudis oleivorans (strain DSM 6200 / JCM 39069 / Hxd3) (Desulfococcus oleovorans).